Consider the following 225-residue polypeptide: Lipoprotein CseA (225 aa).

The first 36 residues, 1–36, serve as a signal peptide directing secretion; the sequence is MRGLTDGRTPRGTRRTTQAASTAVAVFVALGVSLAG. Residue cysteine 37 is the site of N-palmitoyl cysteine attachment. Cysteine 37 carries the S-diacylglycerol cysteine lipid modification. Disordered regions lie at residues 40–77 and 205–225; these read GGTG…APDR and THND…EPDS. Low complexity predominate over residues 60-73; that stretch reads SASPAPAAKASPSK.

The protein resides in the cell membrane. May be involved in the stabilization of the cell envelope or may interact with the sensor protein CseC to modulate its activity, in response to cell envelope stress. The protein is Lipoprotein CseA (cseA) of Streptomyces coelicolor (strain ATCC BAA-471 / A3(2) / M145).